The following is a 390-amino-acid chain: Heat stress transcription factor B-2b (390 aa).

The tract at residues 165–212 (TRDGSPVLSGEEQVISSSSSPEPPLVLPQAPSGSGSGGVASGDVGDEN) is disordered. The stretch at 206–237 (GDVGDENERLRRENAQLARELSQMRKLCNNIL) forms a coiled coil. The hydrophobic repeat HR-A/B stretch occupies residues 215 to 244 (LRRENAQLARELSQMRKLCNNILLLMSKYA). The short motif at 318–322 (RKRMR) is the Nuclear localization signal element. Residues 322 to 363 (RHDGGGDDDHAATVKAEPMDGRPHGKDEQSAETQAWPIYRPR) form a disordered region. The span at 323–350 (HDGGGDDDHAATVKAEPMDGRPHGKDEQ) shows a compositional bias: basic and acidic residues.

The protein belongs to the HSF family. Class B subfamily. As to quaternary structure, homotrimer. Exhibits temperature-dependent phosphorylation.

The protein localises to the nucleus. In terms of biological role, transcriptional regulator that specifically binds DNA of heat shock promoter elements (HSE). This is Heat stress transcription factor B-2b (HSFB2B) from Oryza sativa subsp. japonica (Rice).